Here is a 216-residue protein sequence, read N- to C-terminus: Ribose-5-phosphate isomerase A (216 aa).

Substrate-binding positions include 26–29, 79–82, and 92–95; these read TGST, DGAD, and KGGG. Residue Glu101 is the Proton acceptor of the active site. Residue Lys119 participates in substrate binding.

It belongs to the ribose 5-phosphate isomerase family. Homodimer.

It catalyses the reaction aldehydo-D-ribose 5-phosphate = D-ribulose 5-phosphate. It participates in carbohydrate degradation; pentose phosphate pathway; D-ribose 5-phosphate from D-ribulose 5-phosphate (non-oxidative stage): step 1/1. Its function is as follows. Catalyzes the reversible conversion of ribose-5-phosphate to ribulose 5-phosphate. This Legionella pneumophila (strain Paris) protein is Ribose-5-phosphate isomerase A.